A 256-amino-acid polypeptide reads, in one-letter code: Agamous-like MADS-box protein AGL18 (256 aa).

An MADS-box domain is found at 1–61 (MGRGRIEIKK…GKIYDFSSVC (61 aa)). Residues 94–184 (NEAVLRNDDS…RKQVEMLGRG (91 aa)) enclose the K-box domain. The interval 179-232 (EMLGRGSGPKVLNERPQDSSPEADPESSSSEEDENDNEEHHSDTSLQLGLSSTG) is disordered. Residues 199-215 (PEADPESSSSEEDENDN) show a composition bias toward acidic residues. Residues 222-232 (TSLQLGLSSTG) show a composition bias toward polar residues.

In terms of tissue distribution, mostly expressed in pollen, roots, flowers and siliques, and to a lower extent, in stems and leaves. Expressed in the endosperm and in developing male and female gametophytes. Also present in seedlings.

The protein resides in the nucleus. Its function is as follows. Probable transcription factor involved in the negative regulation of flowering, probably through the photoperiodic pathway. Prevents premature flowering. Downstream regulator of a subset of the MIKC* MADS-controlled genes required during pollen maturation. The chain is Agamous-like MADS-box protein AGL18 (AGL18) from Arabidopsis thaliana (Mouse-ear cress).